The primary structure comprises 126 residues: Large ribosomal subunit protein uL24 (126 aa).

Residues 1–23 (MKFSRDVTSSRRKQRKAHFGAPS) form a disordered region.

The protein belongs to the universal ribosomal protein uL24 family. In terms of assembly, component of the large ribosomal subunit (LSU). Mature yeast ribosomes consist of a small (40S) and a large (60S) subunit. The 40S small subunit contains 1 molecule of ribosomal RNA (18S rRNA) and at least 33 different proteins. The large 60S subunit contains 3 rRNA molecules (25S, 5.8S and 5S rRNA) and at least 46 different proteins.

The protein resides in the cytoplasm. Its subcellular location is the nucleus. It is found in the nucleolus. In terms of biological role, component of the ribosome, a large ribonucleoprotein complex responsible for the synthesis of proteins in the cell. The small ribosomal subunit (SSU) binds messenger RNAs (mRNAs) and translates the encoded message by selecting cognate aminoacyl-transfer RNA (tRNA) molecules. The large subunit (LSU) contains the ribosomal catalytic site termed the peptidyl transferase center (PTC), which catalyzes the formation of peptide bonds, thereby polymerizing the amino acids delivered by tRNAs into a polypeptide chain. The nascent polypeptides leave the ribosome through a tunnel in the LSU and interact with protein factors that function in enzymatic processing, targeting, and the membrane insertion of nascent chains at the exit of the ribosomal tunnel. This Schizosaccharomyces pombe (strain 972 / ATCC 24843) (Fission yeast) protein is Large ribosomal subunit protein uL24 (rpl26).